The sequence spans 444 residues: C4-dicarboxylate transport protein (444 aa).

Helical transmembrane passes span Pro17–Gly37, Leu57–Met77, Leu92–Val112, Glu139–Ala159, Gly161–Gly181, Leu201–Ile221, Met234–Val254, Ile320–Gly340, and Ala368–Ile388.

This sequence belongs to the dicarboxylate/amino acid:cation symporter (DAACS) (TC 2.A.23) family.

The protein resides in the cell inner membrane. Responsible for the transport of dicarboxylates such as succinate, fumarate, and malate from the periplasm across the membrane. This chain is C4-dicarboxylate transport protein, found in Rhizobium johnstonii (strain DSM 114642 / LMG 32736 / 3841) (Rhizobium leguminosarum bv. viciae).